Consider the following 1107-residue polypeptide: Dynein axonemal assembly factor 1 homolog (1107 aa).

LRR repeat units lie at residues 34–56 (HLND…EEYV), 57–78 (GLKC…EYQT), 79–100 (ELKC…DSCK), 101–122 (QLDT…GHDI), 125–146 (VLNT…DHLR), and 150–171 (FVSV…KILG). The region spanning 184-223 (NPVVNEIPSYRKTLILECKNLTYLDTRPVFDRDRACAEAW) is the LRRCT domain. Disordered regions lie at residues 258-281 (HRGD…KASK), 428-487 (NESP…TLNV), 500-608 (ESKD…LEKE), 780-810 (KEEP…EHEQ), 834-855 (SSED…AEED), and 1070-1107 (AAHA…DNCD). Residues 428-437 (NESPLTSPSF) show a composition bias toward polar residues. Positions 446-459 (EEIEPTDVEEEQQI) are enriched in acidic residues. A compositionally biased stretch (basic and acidic residues) spans 500 to 512 (ESKDGELISKVES). The span at 531 to 544 (DNSESEPTDITNED) shows a compositional bias: acidic residues. A compositionally biased stretch (low complexity) spans 549-560 (SSSVSVTSSTDS). Positions 581 to 597 (NYRQDSTTSTDSENEVS) are enriched in polar residues. The segment covering 801–810 (LEVHSSEHEQ) has biased composition (basic and acidic residues). Acidic residues predominate over residues 844 to 855 (DSSESSDSAEED). The segment covering 1083 to 1097 (VESKPVEIDGTKEET) has biased composition (basic and acidic residues). Acidic residues predominate over residues 1098–1107 (VDSELADNCD).

This sequence belongs to the DNAAF1 family.

The protein resides in the cell projection. The protein localises to the cilium. Functionally, cilium-specific protein required for cilia structures. The polypeptide is Dynein axonemal assembly factor 1 homolog (Aedes aegypti (Yellowfever mosquito)).